The chain runs to 208 residues: Putative adhesin P1-like protein MPN_468 (208 aa).

Disordered stretches follow at residues 29 to 49 (TNGS…VAPT) and 97 to 172 (DSKT…NLTP). Residues 100-132 (TQNNTTTNENHTKFASATGSGQQQGSTTTTSAG) show a composition bias toward low complexity. The span at 145 to 158 (SGNSISVQEATSGD) shows a compositional bias: polar residues. The segment covering 159–172 (NLTNYTNLPPNLTP) has biased composition (low complexity).

The protein belongs to the adhesin P1 family.

This Mycoplasma pneumoniae (strain ATCC 29342 / M129 / Subtype 1) (Mycoplasmoides pneumoniae) protein is Putative adhesin P1-like protein MPN_468.